We begin with the raw amino-acid sequence, 30 residues long: GIPCGESCVWIPCISSAIGCSCKNKVCYRN.

Residues Gly-1–Asn-30 constitute a cross-link (cyclopeptide (Gly-Asn)). 3 disulfides stabilise this stretch: Cys-4-Cys-20, Cys-8-Cys-22, and Cys-13-Cys-27.

This is a cyclic peptide. As to expression, expressed in petals, petioles, roots and runners but not in leaves (at protein level).

Probably participates in a plant defense mechanism. The protein is Cycloviolacin-O4 of Viola odorata (Sweet violet).